Here is a 110-residue protein sequence, read N- to C-terminus: Large ribosomal subunit protein uL22 (110 aa).

Belongs to the universal ribosomal protein uL22 family. Part of the 50S ribosomal subunit.

Functionally, this protein binds specifically to 23S rRNA; its binding is stimulated by other ribosomal proteins, e.g. L4, L17, and L20. It is important during the early stages of 50S assembly. It makes multiple contacts with different domains of the 23S rRNA in the assembled 50S subunit and ribosome. Its function is as follows. The globular domain of the protein is located near the polypeptide exit tunnel on the outside of the subunit, while an extended beta-hairpin is found that lines the wall of the exit tunnel in the center of the 70S ribosome. In Teredinibacter turnerae (strain ATCC 39867 / T7901), this protein is Large ribosomal subunit protein uL22.